A 277-amino-acid polypeptide reads, in one-letter code: Hemin import ATP-binding protein HmuV (277 aa).

The region spanning 25–260 (IHAQGLNLIL…DIIERVYGWP (236 aa)) is the ABC transporter domain. Residue 57-64 (GPNGAGKS) coordinates ATP.

It belongs to the ABC transporter superfamily. Heme (hemin) importer (TC 3.A.1.14.5) family. The complex is composed of two ATP-binding proteins (HmuV), two transmembrane proteins (HmuU) and a solute-binding protein (HmuT).

Its subcellular location is the cell inner membrane. Its function is as follows. Part of the ABC transporter complex HmuTUV involved in hemin import. Responsible for energy coupling to the transport system. The sequence is that of Hemin import ATP-binding protein HmuV from Photobacterium profundum (strain SS9).